The chain runs to 255 residues: 5'-nucleotidase SurE (255 aa).

Residues aspartate 16, aspartate 17, serine 47, and asparagine 100 each coordinate a divalent metal cation.

The protein belongs to the SurE nucleotidase family. Requires a divalent metal cation as cofactor.

It is found in the cytoplasm. It catalyses the reaction a ribonucleoside 5'-phosphate + H2O = a ribonucleoside + phosphate. Functionally, nucleotidase that shows phosphatase activity on nucleoside 5'-monophosphates. In Vibrio vulnificus (strain YJ016), this protein is 5'-nucleotidase SurE.